A 375-amino-acid chain; its full sequence is Chaperone protein DnaJ (375 aa).

In terms of domain architecture, J spans 5-69 (DYYEVLGVGK…QKRAHYDQFG (65 aa)). A CR-type zinc finger spans residues 132–214 (GKETTIEIPR…CGGTGKVKKR (83 aa)). Residues cysteine 145, cysteine 148, cysteine 162, cysteine 165, cysteine 188, cysteine 191, cysteine 202, and cysteine 205 each contribute to the Zn(2+) site. 4 CXXCXGXG motif repeats span residues 145 to 152 (CETCSGSG), 162 to 169 (CSHCGGSG), 188 to 195 (CHYCNGTG), and 202 to 209 (CSTCGGTG).

This sequence belongs to the DnaJ family. In terms of assembly, homodimer. Requires Zn(2+) as cofactor.

The protein localises to the cytoplasm. In terms of biological role, participates actively in the response to hyperosmotic and heat shock by preventing the aggregation of stress-denatured proteins and by disaggregating proteins, also in an autonomous, DnaK-independent fashion. Unfolded proteins bind initially to DnaJ; upon interaction with the DnaJ-bound protein, DnaK hydrolyzes its bound ATP, resulting in the formation of a stable complex. GrpE releases ADP from DnaK; ATP binding to DnaK triggers the release of the substrate protein, thus completing the reaction cycle. Several rounds of ATP-dependent interactions between DnaJ, DnaK and GrpE are required for fully efficient folding. Also involved, together with DnaK and GrpE, in the DNA replication of plasmids through activation of initiation proteins. This is Chaperone protein DnaJ from Bacillus licheniformis (strain ATCC 14580 / DSM 13 / JCM 2505 / CCUG 7422 / NBRC 12200 / NCIMB 9375 / NCTC 10341 / NRRL NRS-1264 / Gibson 46).